The chain runs to 240 residues: Urease accessory protein UreF (240 aa).

This sequence belongs to the UreF family. As to quaternary structure, ureD, UreF and UreG form a complex that acts as a GTP-hydrolysis-dependent molecular chaperone, activating the urease apoprotein by helping to assemble the nickel containing metallocenter of UreC. The UreE protein probably delivers the nickel.

Its subcellular location is the cytoplasm. In terms of biological role, required for maturation of urease via the functional incorporation of the urease nickel metallocenter. The protein is Urease accessory protein UreF of Bradyrhizobium sp. (strain ORS 278).